The chain runs to 115 residues: NAD(P)H-quinone oxidoreductase subunit M (115 aa).

This sequence belongs to the complex I NdhM subunit family. As to quaternary structure, NDH-1 can be composed of about 15 different subunits; different subcomplexes with different compositions have been identified which probably have different functions.

The protein resides in the cellular thylakoid membrane. It carries out the reaction a plastoquinone + NADH + (n+1) H(+)(in) = a plastoquinol + NAD(+) + n H(+)(out). The catalysed reaction is a plastoquinone + NADPH + (n+1) H(+)(in) = a plastoquinol + NADP(+) + n H(+)(out). Its function is as follows. NDH-1 shuttles electrons from an unknown electron donor, via FMN and iron-sulfur (Fe-S) centers, to quinones in the respiratory and/or the photosynthetic chain. The immediate electron acceptor for the enzyme in this species is believed to be plastoquinone. Couples the redox reaction to proton translocation, and thus conserves the redox energy in a proton gradient. Cyanobacterial NDH-1 also plays a role in inorganic carbon-concentration. In Prochlorococcus marinus (strain MIT 9312), this protein is NAD(P)H-quinone oxidoreductase subunit M.